Consider the following 196-residue polypeptide: ATP-dependent Clp protease proteolytic subunit (196 aa).

Ser101 functions as the Nucleophile in the catalytic mechanism. Residue His126 is part of the active site.

This sequence belongs to the peptidase S14 family. In terms of assembly, component of the chloroplastic Clp protease core complex.

It is found in the plastid. The protein localises to the chloroplast stroma. It catalyses the reaction Hydrolysis of proteins to small peptides in the presence of ATP and magnesium. alpha-casein is the usual test substrate. In the absence of ATP, only oligopeptides shorter than five residues are hydrolyzed (such as succinyl-Leu-Tyr-|-NHMec, and Leu-Tyr-Leu-|-Tyr-Trp, in which cleavage of the -Tyr-|-Leu- and -Tyr-|-Trp bonds also occurs).. Functionally, cleaves peptides in various proteins in a process that requires ATP hydrolysis. Has a chymotrypsin-like activity. Plays a major role in the degradation of misfolded proteins. The protein is ATP-dependent Clp protease proteolytic subunit of Spinacia oleracea (Spinach).